The following is a 255-amino-acid chain: Putative keratin-87 protein (255 aa).

One can recognise an IF rod domain in the interval 1–255 (MEANSGRLAS…SRGCVRALVL (255 aa)). 2 coiled-coil regions span residues 19–81 (LEGY…EIRV) and 147–227 (LRRT…VMNS).

Belongs to the intermediate filament family. In terms of assembly, heterotetramer of two type I and two type II keratins.

This Homo sapiens (Human) protein is Putative keratin-87 protein (KRT87P).